The chain runs to 882 residues: Alanine--tRNA ligase (882 aa).

His-574, His-578, Cys-682, and His-686 together coordinate Zn(2+). The interval 853-882 is disordered; that stretch reads GGRGGGKGALAQGGGLDPRKAREALPGLLP. Gly residues predominate over residues 854 to 868; that stretch reads GRGGGKGALAQGGGL.

Belongs to the class-II aminoacyl-tRNA synthetase family. The cofactor is Zn(2+).

It localises to the cytoplasm. It carries out the reaction tRNA(Ala) + L-alanine + ATP = L-alanyl-tRNA(Ala) + AMP + diphosphate. Its function is as follows. Catalyzes the attachment of alanine to tRNA(Ala) in a two-step reaction: alanine is first activated by ATP to form Ala-AMP and then transferred to the acceptor end of tRNA(Ala). Also edits incorrectly charged Ser-tRNA(Ala) and Gly-tRNA(Ala) via its editing domain. The sequence is that of Alanine--tRNA ligase from Thermus thermophilus (strain ATCC BAA-163 / DSM 7039 / HB27).